Consider the following 335-residue polypeptide: Acetyl-coenzyme A carboxylase carboxyl transferase subunit alpha (335 aa).

The 255-residue stretch at 40 to 294 folds into the CoA carboxyltransferase C-terminal domain; that stretch reads QLETLAARRR…KEAIEKHLNA (255 aa).

This sequence belongs to the AccA family. As to quaternary structure, acetyl-CoA carboxylase is a heterohexamer composed of biotin carboxyl carrier protein (AccB), biotin carboxylase (AccC) and two subunits each of ACCase subunit alpha (AccA) and ACCase subunit beta (AccD).

The protein resides in the cytoplasm. It catalyses the reaction N(6)-carboxybiotinyl-L-lysyl-[protein] + acetyl-CoA = N(6)-biotinyl-L-lysyl-[protein] + malonyl-CoA. It functions in the pathway lipid metabolism; malonyl-CoA biosynthesis; malonyl-CoA from acetyl-CoA: step 1/1. Its function is as follows. Component of the acetyl coenzyme A carboxylase (ACC) complex. First, biotin carboxylase catalyzes the carboxylation of biotin on its carrier protein (BCCP) and then the CO(2) group is transferred by the carboxyltransferase to acetyl-CoA to form malonyl-CoA. In Prochlorococcus marinus (strain MIT 9301), this protein is Acetyl-coenzyme A carboxylase carboxyl transferase subunit alpha.